The sequence spans 218 residues: DNA-directed RNA polymerase III subunit RPC7-like (218 aa).

The segment at 130 to 218 (TIILPKRPPK…SDDNMDEAIY (89 aa)) is disordered. Over residues 139–160 (KTTEDKEETIQKLETLEKKEEE) the composition is skewed to basic and acidic residues. 2 stretches are compositionally biased toward acidic residues: residues 161–193 (VTSE…EETD) and 201–218 (NGED…EAIY).

Belongs to the eukaryotic RPC7 RNA polymerase subunit family. In terms of assembly, component of the RNA polymerase III (Pol III) complex consisting of 17 subunits. Pol III exists as two alternative complexes defined by the mutually exclusive incorporation of subunit POLR3G/RPC7alpha or POLR3GL/RPC7beta. Found in a trimeric complex with POLR3C/RPC3 and POLR3F/RPC6. Directly interacts with POLR3C.

It is found in the nucleus. Functionally, DNA-dependent RNA polymerase catalyzes the transcription of DNA into RNA using the four ribonucleoside triphosphates as substrates. Specific peripheric component of RNA polymerase III which synthesizes small RNAs, such as 5S rRNA and tRNAs. The sequence is that of DNA-directed RNA polymerase III subunit RPC7-like (POLR3GL) from Bos taurus (Bovine).